Reading from the N-terminus, the 428-residue chain is MVRFESTDSLMLARQLPNKTVALILAGGRGSRLKDLTATRAKPAVHFGGKFRIIDFALSNCLNSGVRRIGVITQYQSHTLVQHIQRGWSFLNEEMNEFVDLLPAQQRLSTEQWYKGTADAVCQNLDIIRRYDAEYIVILAGDHIYKMDYSRMLLDHVEKGAECTVACIPVPISEGSEFGIMEVTADYQITAFYEKPANPPPIPGDPSNALASMGIYIFNADYLFKLLEEDNNTPGSSHDFGKDIIPQLTARKVVWAHPFDLSCVTSNAELPPYWRDVGTLDAYWRANLDLASVTPELDMYDRAWPIRTHMEPLPPAKFVQDRSGSHGMTMNSLVSGGCIVSGSVVVHSVLFPRVRVNSFCTIDSSLLLPDVHVGRSCRLRRCIIDRACHIPEGMVIGENADEDSARFYRSEGGVVLVTRDMLAKLEAK.

Alpha-D-glucose 1-phosphate contacts are provided by residues Tyr-114, Gly-179, 194 to 195, and Ser-212; that span reads EK.

The protein belongs to the bacterial/plant glucose-1-phosphate adenylyltransferase family. Homotetramer.

It carries out the reaction alpha-D-glucose 1-phosphate + ATP + H(+) = ADP-alpha-D-glucose + diphosphate. The protein operates within glycan biosynthesis; glycogen biosynthesis. Involved in the biosynthesis of ADP-glucose, a building block required for the elongation reactions to produce glycogen. Catalyzes the reaction between ATP and alpha-D-glucose 1-phosphate (G1P) to produce pyrophosphate and ADP-Glc. The sequence is that of Glucose-1-phosphate adenylyltransferase from Yersinia pseudotuberculosis serotype O:1b (strain IP 31758).